Consider the following 103-residue polypeptide: Large ribosomal subunit protein uL24 (103 aa).

It belongs to the universal ribosomal protein uL24 family. As to quaternary structure, part of the 50S ribosomal subunit.

One of two assembly initiator proteins, it binds directly to the 5'-end of the 23S rRNA, where it nucleates assembly of the 50S subunit. Functionally, one of the proteins that surrounds the polypeptide exit tunnel on the outside of the subunit. This Haemophilus influenzae (strain 86-028NP) protein is Large ribosomal subunit protein uL24.